Reading from the N-terminus, the 394-residue chain is Potassium channel subfamily K member 3 (394 aa).

Over 1-8 (MKRQNVRT) the chain is Cytoplasmic. A helical transmembrane segment spans residues 9–29 (LALIVCTFTYLLVGAAVFDAL). An N-linked (GlcNAc...) asparagine glycan is attached at Asn53. Positions 78-101 (WRFAGSFYFAITVITTIGYGHAAP) form an intramembrane region, pore-forming. K(+) contacts are provided by Thr93, Ile94, Gly95, and Tyr96. The interval 93–98 (TIGYGH) is selectivity filter 1. A helical transmembrane segment spans residues 108-128 (VFCMFYALLGIPLTLVMFQSL). Residues 129-158 (GERINTLVRYLLHRAKKGLGMRRADVSMAN) lie on the Cytoplasmic side of the membrane. The chain crosses the membrane as a helical span at residues 159 to 179 (MVLIGFFSCISTLCIGAAAFS). An intramembrane region (pore-forming) is located at residues 184–207 (WTFFQAYYYCFITLTTIGFGDYVA). Positions 199, 200, 201, and 202 each coordinate K(+). A selectivity filter 2 region spans residues 199–204 (TIGFGD). Residues 223-243 (FSFVYILTGLTVIGAFLNLVV) traverse the membrane as a helical segment. Positions 243–248 (VLRFMT) are X-gate. Residues 244–394 (LRFMTMNAED…RGLMKRRSSV (151 aa)) are Cytoplasmic-facing. Disordered regions lie at residues 266 to 286 (RNGQAGGGGGGGSAHTTDTAS) and 338 to 357 (TCVEQSHSSPGGGGRYSDTP). Residues 269–278 (QAGGGGGGGS) show a composition bias toward gly residues.

Belongs to the two pore domain potassium channel (TC 1.A.1.8) family. In terms of assembly, homodimer. Heterodimer with KCNK1. Heterodimer with KCNK9. Widespread expression in adult. Strongest expression in pancreas and placenta. Lower expression in brain, lung, prostate, heart, kidney, uterus, small intestine and colon.

The protein localises to the cell membrane. It catalyses the reaction K(+)(in) = K(+)(out). The catalysed reaction is Na(+)(in) = Na(+)(out). With respect to regulation, inhibited by external acidification, diacylglycerol and anandamide. Activated by halothane and isoflurane. In terms of biological role, k(+) channel that conducts voltage-dependent outward rectifying currents upon membrane depolarization. Voltage sensing is coupled to K(+) electrochemical gradient in an 'ion flux gating' mode where outward but not inward ion flow opens the gate. Changes ion selectivity and becomes permeable to Na(+) ions in response to extracellular acidification. Protonation of the pH sensor His-98 stabilizes C-type inactivation conformation likely converting the channel from outward K(+)-conducting, to inward Na(+)-conducting to nonconductive state. Homo- and heterodimerizes to form functional channels with distinct regulatory and gating properties. Allows K(+) currents with fast-gating kinetics important for the repolarization and hyperpolarization phases of action potentials. In cerebellar granule cells, heteromeric KCNK3:KCNK9 channel may hyperpolarize the resting membrane potential to limit intrinsic neuronal excitability, but once the action potential threshold is reached, it may support high-frequency action potential firing and increased neuronal excitability. Dispensable for central chemosensory respiration i.e. breathing controlled by brainstem CO2/pH, it rather conducts pH-sensitive currents and controls the firing rate of serotonergic raphe neurons involved in potentiation of the respiratory chemoreflex. Additionally, imparts chemosensitivity to type 1 cells in carotid bodies which respond to a decrease in arterial oxygen pressure or an increase in carbon dioxide pressure or pH to initiate adaptive changes in pulmonary ventilation. In adrenal gland, contributes to the maintenance of a hyperpolarized resting membrane potential of aldosterone-producing cells at zona glomerulosa and limits aldosterone release as part of a regulatory mechanism that controls arterial blood pressure and electrolyte homeostasis. In brown adipocytes, mediates K(+) efflux that counteracts norepinephrine-induced membrane depolarization, limits Ca(2+) efflux and downstream cAMP and PKA signaling, ultimately attenuating lipid oxidation and adaptive thermogenesis. The polypeptide is Potassium channel subfamily K member 3 (Homo sapiens (Human)).